The chain runs to 423 residues: Gamma-glutamyl phosphate reductase (423 aa).

The protein belongs to the gamma-glutamyl phosphate reductase family.

It is found in the cytoplasm. It catalyses the reaction L-glutamate 5-semialdehyde + phosphate + NADP(+) = L-glutamyl 5-phosphate + NADPH + H(+). It participates in amino-acid biosynthesis; L-proline biosynthesis; L-glutamate 5-semialdehyde from L-glutamate: step 2/2. Catalyzes the NADPH-dependent reduction of L-glutamate 5-phosphate into L-glutamate 5-semialdehyde and phosphate. The product spontaneously undergoes cyclization to form 1-pyrroline-5-carboxylate. The polypeptide is Gamma-glutamyl phosphate reductase (Burkholderia vietnamiensis (strain G4 / LMG 22486) (Burkholderia cepacia (strain R1808))).